The following is a 364-amino-acid chain: Histidinol-phosphate aminotransferase (364 aa).

An N6-(pyridoxal phosphate)lysine modification is found at Lys224.

It belongs to the class-II pyridoxal-phosphate-dependent aminotransferase family. Histidinol-phosphate aminotransferase subfamily. Homodimer. Requires pyridoxal 5'-phosphate as cofactor.

The enzyme catalyses L-histidinol phosphate + 2-oxoglutarate = 3-(imidazol-4-yl)-2-oxopropyl phosphate + L-glutamate. It participates in amino-acid biosynthesis; L-histidine biosynthesis; L-histidine from 5-phospho-alpha-D-ribose 1-diphosphate: step 7/9. The polypeptide is Histidinol-phosphate aminotransferase (Anaeromyxobacter sp. (strain Fw109-5)).